The sequence spans 160 residues: Leptin (160 aa).

An N-terminal signal peptide occupies residues 1–17 (MDYTLALALSLLQLSMC). A disulfide bridge links Cys-109 with Cys-160.

Belongs to the leptin family.

The protein resides in the secreted. In terms of biological role, may function as part of a signaling pathway that acts to regulate the size of the body fat depot. The sequence is that of Leptin (lep) from Tetraodon nigroviridis (Spotted green pufferfish).